A 206-amino-acid polypeptide reads, in one-letter code: MANVSVYNIEGKEVGSIELNDAVFGVEVNEHLVHMAVVNQLANNRQGTQSAKTRSEVSGGGRKPWRQKGTGHARQGSTRSPQWTGGGVVFAPKPRDYSFKMNKKEKRIALLSALSSKVADNKIVVLDAFNLDEIKTKKFAEVMSNLKVDKALVVIEGENKNVVLSGRNIPTVKVSATNEINTYDVLKYETLVVTKAAVEKLEEVYA.

The tract at residues 44-87 (NRQGTQSAKTRSEVSGGGRKPWRQKGTGHARQGSTRSPQWTGGG) is disordered.

This sequence belongs to the universal ribosomal protein uL4 family. In terms of assembly, part of the 50S ribosomal subunit.

Functionally, one of the primary rRNA binding proteins, this protein initially binds near the 5'-end of the 23S rRNA. It is important during the early stages of 50S assembly. It makes multiple contacts with different domains of the 23S rRNA in the assembled 50S subunit and ribosome. In terms of biological role, forms part of the polypeptide exit tunnel. In Lachnospira eligens (strain ATCC 27750 / DSM 3376 / VPI C15-48 / C15-B4) (Eubacterium eligens), this protein is Large ribosomal subunit protein uL4.